A 128-amino-acid chain; its full sequence is Large ribosomal subunit protein bL17 (128 aa).

The protein belongs to the bacterial ribosomal protein bL17 family. In terms of assembly, part of the 50S ribosomal subunit. Contacts protein L32.

The sequence is that of Large ribosomal subunit protein bL17 from Enterobacter sp. (strain 638).